We begin with the raw amino-acid sequence, 131 residues long: uncharacterized protein (131 aa).

Helical transmembrane passes span 61–81 (LLLLPTIYIRSLVSYNVYLPI) and 102–122 (VCSIASLFILVLFLFCFALRY).

The protein resides in the membrane. This is an uncharacterized protein from Saccharomyces cerevisiae (strain ATCC 204508 / S288c) (Baker's yeast).